The chain runs to 83 residues: Cytochrome c oxidase subunit 12, mitochondrial (83 aa).

Residues 24–67 (TKHCWQSYVDYHKCVNMKGEDFAPCKVFWKTYNALCPLDWIEKW) enclose the CHCH domain. The Cx9C motif signature appears at 27-37 (CWQSYVDYHKC). 2 disulfide bridges follow: cysteine 27/cysteine 59 and cysteine 37/cysteine 48. A Cx10C motif motif is present at residues 48–59 (CKVFWKTYNALC). Phosphoserine is present on serine 82.

Belongs to the cytochrome c oxidase subunit 6B family. Component of the cytochrome c oxidase (complex IV, CIV), a multisubunit enzyme composed of 12 subunits. The complex is composed of a catalytic core of 3 subunits COX1, COX2 and COX3, encoded in the mitochondrial DNA, and 9 supernumerary subunits COX4, COX5A (or COX5B), COX6, COX7, COX8, COX9, COX12, COX13 and COX26, which are encoded in the nuclear genome. The complex exists as a monomer or a dimer and forms supercomplexes (SCs) in the inner mitochondrial membrane with a dimer of ubiquinol-cytochrome c oxidoreductase (cytochrome b-c1 complex, complex III, CIII), resulting in 2 different assemblies (supercomplexes III(2)IV and III(2)IV(2)).

The protein localises to the mitochondrion inner membrane. Its pathway is energy metabolism; oxidative phosphorylation. Functionally, component of the cytochrome c oxidase, the last enzyme in the mitochondrial electron transport chain which drives oxidative phosphorylation. The respiratory chain contains 3 multisubunit complexes succinate dehydrogenase (complex II, CII), ubiquinol-cytochrome c oxidoreductase (cytochrome b-c1 complex, complex III, CIII) and cytochrome c oxidase (complex IV, CIV), that cooperate to transfer electrons derived from NADH and succinate to molecular oxygen, creating an electrochemical gradient over the inner membrane that drives transmembrane transport and the ATP synthase. Cytochrome c oxidase is the component of the respiratory chain that catalyzes the reduction of oxygen to water. Electrons originating from reduced cytochrome c in the intermembrane space (IMS) are transferred via the dinuclear copper A center (CU(A)) of COX2 and heme A of COX1 to the active site in COX1, a binuclear center (BNC) formed by heme A3 and copper B (CU(B)). The BNC reduces molecular oxygen to 2 water molecules unsing 4 electrons from cytochrome c in the IMS and 4 protons from the mitochondrial matrix. This chain is Cytochrome c oxidase subunit 12, mitochondrial (COX12), found in Saccharomyces cerevisiae (strain ATCC 204508 / S288c) (Baker's yeast).